The primary structure comprises 285 residues: Zinc transporter ZupT (285 aa).

3 helical membrane passes run 13-33 (AFLL…IAFF), 41-61 (FLCV…MIEM), and 80-100 (WITV…DKFV). Fe(2+)-binding residues include asparagine 153 and glutamate 156. Position 156 (glutamate 156) interacts with Zn(2+). The chain crosses the membrane as a helical span at residues 160 to 180 (TFVSALEGASLAIPITIAIAI). Histidine 181 lines the Zn(2+) pocket. Fe(2+)-binding residues include asparagine 182, glutamate 185, and glutamate 214. A Zn(2+)-binding site is contributed by glutamate 185. A run of 3 helical transmembrane segments spans residues 204–224 (FLYS…GYTL), 228–248 (IFND…MVFI), and 265–285 (LAIY…LLFI).

This sequence belongs to the ZIP transporter (TC 2.A.5) family. ZupT subfamily.

It is found in the cell membrane. It catalyses the reaction Zn(2+)(in) = Zn(2+)(out). In terms of biological role, mediates zinc uptake. May also transport other divalent cations. This Clostridium perfringens (strain 13 / Type A) protein is Zinc transporter ZupT.